The sequence spans 110 residues: METIAKHRYARTSAQKARLVADLIRGKKVAQALEILTFTNKKASALVKKVLESAIANAEHNDGADVDDLKVAKIFVDEGPSMKRVMPRAKGRADRILKRTSHITVVVSDR.

This sequence belongs to the universal ribosomal protein uL22 family. In terms of assembly, part of the 50S ribosomal subunit.

Its function is as follows. This protein binds specifically to 23S rRNA; its binding is stimulated by other ribosomal proteins, e.g. L4, L17, and L20. It is important during the early stages of 50S assembly. It makes multiple contacts with different domains of the 23S rRNA in the assembled 50S subunit and ribosome. The globular domain of the protein is located near the polypeptide exit tunnel on the outside of the subunit, while an extended beta-hairpin is found that lines the wall of the exit tunnel in the center of the 70S ribosome. This is Large ribosomal subunit protein uL22 from Haemophilus ducreyi (strain 35000HP / ATCC 700724).